The primary structure comprises 248 residues: 4-hydroxy-tetrahydrodipicolinate reductase (248 aa).

Residues Gly-8–Met-13, Gly-75–Thr-77, and Ala-99–Met-102 each bind NAD(+). The Proton donor/acceptor role is filled by His-131. A (S)-2,3,4,5-tetrahydrodipicolinate-binding site is contributed by His-132. Lys-135 (proton donor) is an active-site residue. Position 141-142 (Gly-141–Thr-142) interacts with (S)-2,3,4,5-tetrahydrodipicolinate.

This sequence belongs to the DapB family.

It is found in the cytoplasm. The catalysed reaction is (S)-2,3,4,5-tetrahydrodipicolinate + NAD(+) + H2O = (2S,4S)-4-hydroxy-2,3,4,5-tetrahydrodipicolinate + NADH + H(+). It carries out the reaction (S)-2,3,4,5-tetrahydrodipicolinate + NADP(+) + H2O = (2S,4S)-4-hydroxy-2,3,4,5-tetrahydrodipicolinate + NADPH + H(+). The protein operates within amino-acid biosynthesis; L-lysine biosynthesis via DAP pathway; (S)-tetrahydrodipicolinate from L-aspartate: step 4/4. Catalyzes the conversion of 4-hydroxy-tetrahydrodipicolinate (HTPA) to tetrahydrodipicolinate. The chain is 4-hydroxy-tetrahydrodipicolinate reductase from Campylobacter jejuni subsp. doylei (strain ATCC BAA-1458 / RM4099 / 269.97).